The sequence spans 261 residues: Kallikrein 1-related peptidase b1 (261 aa).

The N-terminal stretch at 1-18 is a signal peptide; that stretch reads MWFLILFLALSLGGIDAA. Positions 19-24 are cleaved as a propeptide — activation peptide; sequence PPVQSR. The Peptidase S1 domain maps to 25–258; that stretch reads IVGGFKCEKN…FTSWIKDTLA (234 aa). 5 disulfides stabilise this stretch: C31–C173, C50–C66, C152–C219, C184–C198, and C209–C234. H65 functions as the Charge relay system in the catalytic mechanism. N102 carries an N-linked (GlcNAc...) asparagine glycan. D120 acts as the Charge relay system in catalysis. Residue S213 is the Charge relay system of the active site.

The protein belongs to the peptidase S1 family. Kallikrein subfamily.

It catalyses the reaction Preferential cleavage of Arg-|-Xaa bonds in small molecule substrates. Highly selective action to release kallidin (lysyl-bradykinin) from kininogen involves hydrolysis of Met-|-Xaa or Leu-|-Xaa.. Its function is as follows. Glandular kallikreins cleave Met-Lys and Arg-Ser bonds in kininogen to release Lys-bradykinin. This chain is Kallikrein 1-related peptidase b1 (Klk1b1), found in Mus musculus (Mouse).